A 1770-amino-acid polypeptide reads, in one-letter code: MKFMSATAVFAAALSSVTEASSIQDQIKNTDCNVSKLGYSTSQAFTDMMLADNTEYRAADSVSFYDFSTSSRLPRKHLSSSSEASPTTEGVSSSSSGETDEKTEEELDNGGIIYAREKLTISESQDSLSNQSIELHDNSIFFGEGEVIFDHRVALKNGGAIYGEKEVVFENIKSLLVEVNIAVEKGGSVYAKERVSLENVTEATFSSNGGEQGGGGIYSEQDMLISDCNNVHFQGNAAGATAVKQCLDEEMIVLLAECVDSLSEDTLDSTPETEQTESNGNQDGSSETEDTQVSESPESTPSPDDVLGKGGGIYTEKSLTITGITGTIDFVSNIATDSGAGVFTKENLSCTNTNSLQFLKNSAGQHGGGAYVTQTMSVTNTTSESITTPPLIGEVIFSENTAKGHGGGICTNKLSLSNLKTVTLTKNSAKESGGAIFTDLASIPITDTPESSTPSSSSPASTPEVVASAKINRFFASTAKPAAPSLTEAESDQTDQTETSDTNSDIDVSIENILNVAINQNTSAKKGGAIYGKKAKLSRINNLELSGNSSQDVGGGLCLTESVEFDAIGSLLSHYNSAAKEGGAIHSKTVTLSNLKSTFTFADNTVKAIVESTPEAPEEIPPVEGEESTATEDPNSNTEGSSANTNLEGSQGDTADTGTGDVNNESQDTSDTGNAESEEQLQDSTQSNEENTLPNSNIDQSNENTDESSDSHTEEITDESVSSSSESGSSTPQDGGAASSGAPSGDQSISANACLAKSYAASTDSSPVSNSSGSEEPVTSSSDSDVTASSDNPDSSSSGDSAGDSEEPTEPEAGSTTETLTLIGGGAIYGETVKIENFSGQGIFSGNKAIDNTTEGSSSKSDVLGGAVYAKTLFNLDSGSSRRTVTFSGNTVSSQSTTGQVAGGAIYSPTVTIATPVVFSKNSATNNANNTTDTQRKDTFGGAIGATSAVSLSGGAHFLENVADLGSAIGLVPGTQNTETVKLESGSYYFEKNKALKRATIYAPVVSIKAYTATFNQNRSLEEGSAIYFTKEASIESLGSVLFTGNLVTLTLSTTTEGTPATTSGDVTKYGAAIFGQIASSNGSQTDNLPLKLIASGGNICFRNNEYRPTSSDTGTSTFCSIAGDVKLTMQAAKGKTISFFDAIRTSTKKTGTQATAYDTLDINKSEDSETVNSAFTGTILFSSELHENKSYIPQNVVLHSGSLVLKPNTELHVISFEQKEGSSLVMTPGSVLSNQTVADGALVINNMTIDLSSVEKNGIAEGNIFTPPELRIIDTTTGGSGGTPSTDSESNQNSDDTEEQNNNDASNQGESANGSSSPAVAAAHTSRTRNFAAAATATPTTTPTATTTTSNQVILGGEIKLIDPNGTFFQNPALRSDQQISLLVLPTDSSKMQAQKIVLTGDIAPQKGYTGTLTLDPDQLQNGTISVLWKFDSYRQWAYVPRDNHFYANSILGSQMLMVTVKQGLLNDKMNLARFEEVSYNNLWISGLGTMLSQVGTPTSEEFTYYSRGASVALDAKPAHDVIVGAAFSKMIGKTKSLKRENNYTHKGSEYSYQASVYGGKPFHFVINKKTEKSLPLLLQGVISYGYIKHDTVTHYPTIRERNKGEWEDLGWLTALRVSSVLRTPAQGDTKRITVYGELEYSSIRQKQFTETEYDPRYFDNCTYRNLAIPMGLAFEGELSGNDILMYNRFSVAYMLSIYRNSPTCKYQVLSSGEGGEIICGVPTRNSARGEYSTQLYLGPLWTLYGSYTIEADAHTLAHMMNCGARMTF.

An N-terminal signal peptide occupies residues 1–20 (MKFMSATAVFAAALSSVTEA). 5 disordered regions span residues 73–109 (LPRKHLSSSSEASPTTEGVSSSSSGETDEKTEEELDN), 264–311 (EDTL…GKGG), 481–505 (PAAPSLTEAESDQTDQTETSDTNSD), 611–818 (ESTP…STTE), and 1271–1329 (LRII…TSRT). The segment covering 85-97 (SPTTEGVSSSSSG) has biased composition (low complexity). Polar residues predominate over residues 268-285 (DSTPETEQTESNGNQDGS). 2 stretches are compositionally biased toward low complexity: residues 294–303 (SESPESTPSP) and 496–505 (QTETSDTNSD). 2 stretches are compositionally biased toward polar residues: residues 631 to 675 (TEDP…TGNA) and 682 to 703 (QDSTQSNEENTLPNSNIDQSNE). Low complexity-rich tracts occupy residues 719 to 748 (ESVSSSSESGSSTPQDGGAASSGAPSGDQS) and 762 to 802 (STDS…GDSA). Residues 1303–1319 (NNDASNQGESANGSSSP) show a composition bias toward polar residues. One can recognise an Autotransporter domain in the interval 1477-1770 (EEVSYNNLWI…MMNCGARMTF (294 aa)).

The protein belongs to the PMP outer membrane protein family.

It is found in the secreted. Its subcellular location is the cell wall. The protein localises to the cell outer membrane. This is Probable outer membrane protein PmpC (pmpC) from Chlamydia trachomatis serovar D (strain ATCC VR-885 / DSM 19411 / UW-3/Cx).